Consider the following 286-residue polypeptide: MEGKEEDVRLGANKFSERQPIGTAAQSDKGYKEPPPAPLFEPGELTSWSFYRAGIAEFMATFLFLYITILTVMGVVKSNSKCSTVGIQGIAWAFGGMIFALVYCTAGISGGHINPAVTFGLFLARKLSLTRALFYMVMQCLGAICGAGVVKGYQKGLYESNGGGANVVAPGYTKGDGLGAEIVGTFILVYTVFSATDAKRNARDSHVPILAPLPIGFAVFLVHLATIPITGTGINPARSLGAAIIYNKKHAWDDHWIFWVGPFIGAALAAIYHQIVIRAIPFKSRP.

A disordered region spans residues 1 to 34 (MEGKEEDVRLGANKFSERQPIGTAAQSDKGYKEP). The Cytoplasmic segment spans residues 1-54 (MEGKEEDVRLGANKFSERQPIGTAAQSDKGYKEPPPAPLFEPGELTSWSFYRAG). The helical transmembrane segment at 55–75 (IAEFMATFLFLYITILTVMGV) threads the bilayer. At 76-88 (VKSNSKCSTVGIQ) the chain is on the extracellular side. The chain crosses the membrane as a helical span at residues 89 to 109 (GIAWAFGGMIFALVYCTAGIS). At 110–131 (GGHINPAVTFGLFLARKLSLTR) the chain is on the cytoplasmic side. The short motif at 114–116 (NPA) is the NPA 1 element. Residues 132–152 (ALFYMVMQCLGAICGAGVVKG) traverse the membrane as a helical segment. Over 153-174 (YQKGLYESNGGGANVVAPGYTK) the chain is Extracellular. A helical membrane pass occupies residues 175–195 (GDGLGAEIVGTFILVYTVFSA). The Cytoplasmic portion of the chain corresponds to 196-208 (TDAKRNARDSHVP). A helical membrane pass occupies residues 209–229 (ILAPLPIGFAVFLVHLATIPI). Topologically, residues 230–256 (TGTGINPARSLGAAIIYNKKHAWDDHW) are extracellular. The NPA 2 motif lies at 235–237 (NPA). The chain crosses the membrane as a helical span at residues 257 to 277 (IFWVGPFIGAALAAIYHQIVI). At 278–286 (RAIPFKSRP) the chain is on the cytoplasmic side.

It belongs to the MIP/aquaporin (TC 1.A.8) family. PIP (TC 1.A.8.11) subfamily. In terms of tissue distribution, expressed in leaves, roots, stems, flowers and fruits, with highest levels in roots.

It is found in the cell membrane. Water channel required to facilitate the transport of water across cell membrane; mercury-insensitive. Promotes primary root elongation and root hair formation. Contributes to the tolerance to multiple abiotic stresses including salt (NaCl), cold and water deprivation, by modulating cytosolic K(+)/Na(+) ratio, maintaining osmotic balance, and reducing membrane injury (e.g. oxidative injury). Also regulates the expression of abscisic acid (ABA)-responsive genes during dehydration and salt stresses. This chain is Aquaporin PIP1-1, found in Musa acuminata (Banana).